Reading from the N-terminus, the 399-residue chain is Probable WRKY transcription factor 48 (399 aa).

Composition is skewed to basic and acidic residues over residues 1–11 (MEKKKEEDHHH) and 19–38 (KEIK…EQKQ). Disordered stretches follow at residues 1–57 (MEKK…TSSD) and 138–202 (AESS…KNQK). A compositionally biased stretch (low complexity) spans 143–161 (VVNTTPTSPNSTSVSSSSN). Residues 162 to 171 (EAANDNNSGK) show a composition bias toward polar residues. Over residues 184-193 (QQEQKGTKPQ) the composition is skewed to low complexity. The WRKY DNA-binding region spans 215-280 (SDIDNLDDGY…YEGQHTHPFP (66 aa)). The disordered stretch occupies residues 361–399 (QASTSTSSSIRDHGLLQDILPSQIRSDTINTQTNEENKK). Residues 383–399 (QIRSDTINTQTNEENKK) show a composition bias toward polar residues.

It is found in the nucleus. In terms of biological role, transcription factor. Interacts specifically with the W box (5'-(T)TGAC[CT]-3'), a frequently occurring elicitor-responsive cis-acting element. In Arabidopsis thaliana (Mouse-ear cress), this protein is Probable WRKY transcription factor 48 (WRKY48).